We begin with the raw amino-acid sequence, 87 residues long: Toxin Cll5b (87 aa).

A signal peptide spans 1–19; the sequence is MNSLLMITACLAEIGTVWA. Positions 20–85 constitute an LCN-type CS-alpha/beta domain; the sequence is KEGYLVNKST…TYPLPNKSCS (66 aa). 4 disulfide bridges follow: Cys-31/Cys-84, Cys-35/Cys-60, Cys-44/Cys-65, and Cys-48/Cys-67. Residues 86-87 constitute a propeptide, removed by a carboxypeptidase; the sequence is KK.

The protein belongs to the long (4 C-C) scorpion toxin superfamily. Sodium channel inhibitor family. Beta subfamily. As to expression, expressed by the venom gland.

The protein localises to the secreted. Beta toxins bind voltage-independently at site-4 of sodium channels (Nav) and shift the voltage of activation toward more negative potentials thereby affecting sodium channel activation and promoting spontaneous and repetitive firing. In Centruroides limpidus (Mexican scorpion), this protein is Toxin Cll5b.